The following is a 267-amino-acid chain: L-erythrulose-1-phosphate isomerase (267 aa).

His-95 serves as the catalytic Electrophile. The active-site Proton acceptor is the Glu-168. Residues Gly-174 and Ser-211 each contribute to the substrate site.

Belongs to the triosephosphate isomerase family. As to quaternary structure, homodimer.

It is found in the cytoplasm. It catalyses the reaction L-erythrulose 1-phosphate = D-erythrulose 4-phosphate. It functions in the pathway carbohydrate metabolism; erythritol degradation. Its function is as follows. Catalyzes the isomerization of D-erythrulose-4P to L-erythrulose-1P. The polypeptide is L-erythrulose-1-phosphate isomerase (Rhizobium etli (strain ATCC 51251 / DSM 11541 / JCM 21823 / NBRC 15573 / CFN 42)).